Consider the following 844-residue polypeptide: Janus kinase and microtubule-interacting protein 3 (844 aa).

A coiled-coil region spans residues 8 to 259; sequence SRAKGDKAET…LSQAKEAERH (252 aa). A disordered region spans residues 249 to 290; it reads QLSQAKEAERHPGSPRRELPYASGAGDASDHSGSPEQQLDEK. A compositionally biased stretch (basic and acidic residues) spans 254-267; it reads KEAERHPGSPRREL. The segment covering 270 to 282 has biased composition (low complexity); it reads ASGAGDASDHSGS. Residues 289-421 are a coiled coil; sequence EKDARRFQLK…DELSKTLETA (133 aa). The residue at position 384 (S384) is a Phosphoserine. Polar residues predominate over residues 466-483; sequence SDGSSISYQTDRTDQTPC. A disordered region spans residues 466–488; sequence SDGSSISYQTDRTDQTPCTPEDD. 2 coiled-coil regions span residues 493 to 621 and 688 to 833; these read MAKE…RERK and EKWL…LFLF.

It belongs to the JAKMIP family.

It is found in the golgi apparatus. This is Janus kinase and microtubule-interacting protein 3 (Jakmip3) from Mus musculus (Mouse).